Consider the following 329-residue polypeptide: Malate dehydrogenase (329 aa).

12 to 18 (GAAGQIG) contributes to the NAD(+) binding site. Residues R95 and R101 each coordinate substrate. NAD(+) contacts are provided by residues N108, Q115, and 132–134 (VGN). Residues N134 and R165 each contribute to the substrate site. The active-site Proton acceptor is the H190.

The protein belongs to the LDH/MDH superfamily. MDH type 2 family.

It carries out the reaction (S)-malate + NAD(+) = oxaloacetate + NADH + H(+). Catalyzes the reversible oxidation of malate to oxaloacetate. The sequence is that of Malate dehydrogenase from Janthinobacterium sp. (strain Marseille) (Minibacterium massiliensis).